The following is a 431-amino-acid chain: Enolase (431 aa).

Glutamine 163 provides a ligand contact to (2R)-2-phosphoglycerate. The active-site Proton donor is the glutamate 205. 3 residues coordinate Mg(2+): aspartate 242, glutamate 288, and aspartate 315. (2R)-2-phosphoglycerate is bound by residues lysine 340, arginine 369, serine 370, and lysine 391. Residue lysine 340 is the Proton acceptor of the active site.

The protein belongs to the enolase family. It depends on Mg(2+) as a cofactor.

The protein localises to the cytoplasm. It localises to the secreted. Its subcellular location is the cell surface. The enzyme catalyses (2R)-2-phosphoglycerate = phosphoenolpyruvate + H2O. Its pathway is carbohydrate degradation; glycolysis; pyruvate from D-glyceraldehyde 3-phosphate: step 4/5. In terms of biological role, catalyzes the reversible conversion of 2-phosphoglycerate (2-PG) into phosphoenolpyruvate (PEP). It is essential for the degradation of carbohydrates via glycolysis. The polypeptide is Enolase (Bacillus anthracis (strain A0248)).